The following is a 74-amino-acid chain: Large ribosomal subunit protein uL29 (74 aa).

The protein belongs to the universal ribosomal protein uL29 family.

The polypeptide is Large ribosomal subunit protein uL29 (Streptomyces griseus subsp. griseus (strain JCM 4626 / CBS 651.72 / NBRC 13350 / KCC S-0626 / ISP 5235)).